The sequence spans 258 residues: Proteasome subunit alpha (258 aa).

This sequence belongs to the peptidase T1A family. As to quaternary structure, the 20S proteasome core is composed of 14 alpha and 14 beta subunits that assemble into four stacked heptameric rings, resulting in a barrel-shaped structure. The two inner rings, each composed of seven catalytic beta subunits, are sandwiched by two outer rings, each composed of seven alpha subunits. The catalytic chamber with the active sites is on the inside of the barrel. Has a gated structure, the ends of the cylinder being occluded by the N-termini of the alpha-subunits. Is capped at one or both ends by the proteasome regulatory ATPase, PAN.

The protein localises to the cytoplasm. With respect to regulation, the formation of the proteasomal ATPase PAN-20S proteasome complex, via the docking of the C-termini of PAN into the intersubunit pockets in the alpha-rings, triggers opening of the gate for substrate entry. Interconversion between the open-gate and close-gate conformations leads to a dynamic regulation of the 20S proteasome proteolysis activity. Component of the proteasome core, a large protease complex with broad specificity involved in protein degradation. This is Proteasome subunit alpha from Aeropyrum pernix (strain ATCC 700893 / DSM 11879 / JCM 9820 / NBRC 100138 / K1).